The sequence spans 232 residues: 7-cyano-7-deazaguanine synthase (232 aa).

7–17 is a binding site for ATP; sequence CSGGLDSVSLA. Positions 185, 193, 196, and 199 each coordinate Zn(2+).

This sequence belongs to the QueC family. Zn(2+) serves as cofactor.

The enzyme catalyses 7-carboxy-7-deazaguanine + NH4(+) + ATP = 7-cyano-7-deazaguanine + ADP + phosphate + H2O + H(+). It participates in purine metabolism; 7-cyano-7-deazaguanine biosynthesis. In terms of biological role, catalyzes the ATP-dependent conversion of 7-carboxy-7-deazaguanine (CDG) to 7-cyano-7-deazaguanine (preQ(0)). The protein is 7-cyano-7-deazaguanine synthase of Brucella canis (strain ATCC 23365 / NCTC 10854 / RM-666).